Consider the following 190-residue polypeptide: MDRKEQKSIIEGLLFVSGDEGIYPEQIAKVLEIEMNEAINILEEMQQECEGANRGLQIVQYAKVYRFATKKEHASYYQKLIDTPTAASLSQAALETLAIVAYRQPITRTEMEEIRGVKTDKALQTLVSHLLIKEMGRAEGPGRPILYGTTKEFLDTFGLKTLDDLPPLSEENEQMNEADLFFGSLQEISK.

Belongs to the ScpB family. As to quaternary structure, homodimer. Homodimerization may be required to stabilize the binding of ScpA to the Smc head domains. Component of a cohesin-like complex composed of ScpA, ScpB and the Smc homodimer, in which ScpA and ScpB bind to the head domain of Smc. The presence of the three proteins is required for the association of the complex with DNA.

The protein resides in the cytoplasm. Its function is as follows. Participates in chromosomal partition during cell division. May act via the formation of a condensin-like complex containing Smc and ScpA that pull DNA away from mid-cell into both cell halves. The protein is Segregation and condensation protein B of Bacillus cereus (strain B4264).